We begin with the raw amino-acid sequence, 565 residues long: Beta-hexosaminidase subunit beta (565 aa).

A signal peptide spans 1-13; it reads MIVLLLLISYCFA. N-linked (GlcNAc...) asparagine glycosylation is present at asparagine 71. Catalysis depends on glutamate 347, which acts as the Proton donor.

The protein belongs to the glycosyl hydrolase 20 family. As to quaternary structure, heterodimer of one alpha subunit and one beta subunit. Glycosylated.

It is found in the cytoplasmic granule. It localises to the secreted. It catalyses the reaction Hydrolysis of terminal non-reducing N-acetyl-D-hexosamine residues in N-acetyl-beta-D-hexosaminides.. In terms of biological role, hydrolyzes the non-reducing end N-acetyl-D-hexosamine and/or sulfated N-acetyl-D-hexosamine of glycoconjugates. May contribute to amoebic pathogenicity and may be involved in the destruction of extracellular matrix components. This is Beta-hexosaminidase subunit beta from Entamoeba histolytica (strain ATCC 30459 / HM-1:IMSS / ABRM).